The sequence spans 261 residues: MATTTCQVVGLLLSLLGLAGCIAATGMDMWSTQDLYDNPVTSVFQYEGLWRSCVQQSSGFTECRPYFTILGLPAMLQAVRALMIVGIVLGVIGILVSIFALKCIRIGSMDDSAKAKMTLTSGIMFIISGVCAIIGVSVFANMLVTNFWMSTANMYSGMGGMVQTVQTRYTFGAALFVGWIAGGLTLIGGVMMCIACRGLTPDDRNFKAVSYHASGQNVAYKPGGFKASTGFGSNARNKKIYDGGARTEDDEQSHPTKYDYV.

The Cytoplasmic portion of the chain corresponds to 1-6; sequence MATTTC. A helical transmembrane segment spans residues 7–27; that stretch reads QVVGLLLSLLGLAGCIAATGM. The Extracellular portion of the chain corresponds to 28–80; it reads DMWSTQDLYDNPVTSVFQYEGLWRSCVQQSSGFTECRPYFTILGLPAMLQAVR. The chain crosses the membrane as a helical span at residues 81 to 101; it reads ALMIVGIVLGVIGILVSIFAL. Over 102–122 the chain is Cytoplasmic; the sequence is KCIRIGSMDDSAKAKMTLTSG. Residues 123–143 traverse the membrane as a helical segment; it reads IMFIISGVCAIIGVSVFANML. At 144-173 the chain is on the extracellular side; that stretch reads VTNFWMSTANMYSGMGGMVQTVQTRYTFGA. The helical transmembrane segment at 174–194 threads the bilayer; it reads ALFVGWIAGGLTLIGGVMMCI. Over 195–261 the chain is Cytoplasmic; sequence ACRGLTPDDR…QSHPTKYDYV (67 aa). Residues 195–261 are required for role in regulation of RANKL-induced osteoclast differentiation; that stretch reads ACRGLTPDDR…QSHPTKYDYV (67 aa). S214 is modified (phosphoserine). Residues 242-261 form a disordered region; that stretch reads DGGARTEDDEQSHPTKYDYV.

The protein belongs to the claudin family. In terms of assembly, interacts with TJP2/ZO-2. Interacts with TJP1/ZO-1. Interacts with YAP1 (phosphorylated); the interaction sequesters YAP1 away from the nucleus and thereby restricts transcription of YAP1 target genes. Interacts with CLDN19. Expressed in the lung (at protein level).

It localises to the cell junction. The protein localises to the tight junction. The protein resides in the cell membrane. Involved in alveolar fluid homeostasis via regulation of alveolar epithelial tight junction composition and therefore ion transport and solute permeability, potentially via downstream regulation of the actin cytoskeleton organization and beta-2-adrenergic signaling. Required for lung alveolarization and maintenance of the paracellular alveolar epithelial barrier. Acts to maintain epithelial progenitor cell proliferation and organ size, via regulation of YAP1 localization away from the nucleus and thereby restriction of YAP1 target gene transcription. Acts as a negative regulator of RANKL-induced osteoclast differentiation, potentially via relocation of TJP2/ZO-2 away from the nucleus, subsequently involved in bone resorption in response to calcium deficiency. Mediates the osteoprotective effects of estrogen, potentially via acting downstream of estrogen signaling independently of RANKL signaling pathways. Its function is as follows. Required for the formation of the gastric paracellular barrier via its role in tight junction formation, thereby involved in the response to gastric acidification. The protein is Claudin-18 of Rattus norvegicus (Rat).